The primary structure comprises 785 residues: Probable serine protease Ga0098714_109514 (785 aa).

2 stretches are compositionally biased toward basic and acidic residues: residues 470–481 (LDHGKNGREGGR) and 491–501 (DGPEHPNHYAD). 2 disordered regions span residues 470 to 503 (LDHG…ADID) and 608 to 629 (DGDA…EEVS).

It belongs to the peptidase S1 family.

Functionally, probably a dedicated protease for substrate gasdermin bGSDM; cleaves the bGSDM precursor, releasing the pore-forming moiety, which integrates into the membrane and triggers cell death. Involved in defense against bacteriophages. Expression of gasdermin bGSDM and this neighboring protease is toxic in E.coli on solid medium. The protein is Probable serine protease Ga0098714_109514 of Bradyrhizobium tropiciagri.